Consider the following 170-residue polypeptide: Disulfide bond formation protein B 1 (170 aa).

Topologically, residues 1-14 are cytoplasmic; that stretch reads MNDYTLAIRRERRL. A helical transmembrane segment spans residues 15-31; that stretch reads LMLLGWVCIALLAGALY. The Periplasmic segment spans residues 32-49; the sequence is LQYVKNEDPCPLCIIQRY. Cysteine 41 and cysteine 44 are disulfide-bonded. The chain crosses the membrane as a helical span at residues 50–64; that stretch reads FFCAIGIFAFLAAGI. Residues 65 to 71 lie on the Cytoplasmic side of the membrane; it reads RNWRGVW. A helical membrane pass occupies residues 72–89; the sequence is VLELLIAIAAAGGVGTAA. Residues 90-144 are Periplasmic-facing; it reads RHLTIQMNPGFSCGFDTLQPIVDSLPPAQWFPGMFKVAGLCETVYPPIFGILLPG. Cysteine 102 and cysteine 130 are oxidised to a cystine. Residues 145 to 163 traverse the membrane as a helical segment; that stretch reads WSLIGFAVILIAVVASLWR. Topologically, residues 164-170 are cytoplasmic; it reads HRRKLVG.

It belongs to the DsbB family.

It localises to the cell inner membrane. In terms of biological role, required for disulfide bond formation in some periplasmic proteins. Acts by oxidizing the DsbA protein. The chain is Disulfide bond formation protein B 1 from Burkholderia lata (strain ATCC 17760 / DSM 23089 / LMG 22485 / NCIMB 9086 / R18194 / 383).